The primary structure comprises 94 residues: Putative pterin-4-alpha-carbinolamine dehydratase (94 aa).

This sequence belongs to the pterin-4-alpha-carbinolamine dehydratase family.

The enzyme catalyses (4aS,6R)-4a-hydroxy-L-erythro-5,6,7,8-tetrahydrobiopterin = (6R)-L-erythro-6,7-dihydrobiopterin + H2O. This is Putative pterin-4-alpha-carbinolamine dehydratase from Mycobacterium leprae (strain Br4923).